The following is a 135-amino-acid chain: uncharacterized protein (135 aa).

This is an uncharacterized protein from Saccharomyces cerevisiae (strain ATCC 204508 / S288c) (Baker's yeast).